The following is a 171-amino-acid chain: NADH-quinone oxidoreductase subunit I 1 (171 aa).

4Fe-4S ferredoxin-type domains lie at 39–71 (IVLT…LTKA) and 81–110 (EHFR…LTPD). [4Fe-4S] cluster-binding residues include cysteine 51, cysteine 54, cysteine 57, cysteine 61, cysteine 90, cysteine 93, cysteine 96, and cysteine 100.

This sequence belongs to the complex I 23 kDa subunit family. In terms of assembly, NDH-1 is composed of 14 different subunits. Subunits NuoA, H, J, K, L, M, N constitute the membrane sector of the complex. Requires [4Fe-4S] cluster as cofactor.

Its subcellular location is the cell inner membrane. It catalyses the reaction a quinone + NADH + 5 H(+)(in) = a quinol + NAD(+) + 4 H(+)(out). NDH-1 shuttles electrons from NADH, via FMN and iron-sulfur (Fe-S) centers, to quinones in the respiratory chain. The immediate electron acceptor for the enzyme in this species is believed to be ubiquinone. Couples the redox reaction to proton translocation (for every two electrons transferred, four hydrogen ions are translocated across the cytoplasmic membrane), and thus conserves the redox energy in a proton gradient. This is NADH-quinone oxidoreductase subunit I 1 from Rhodopseudomonas palustris (strain BisB5).